Reading from the N-terminus, the 1045-residue chain is V(D)J recombination-activating protein 1 (1045 aa).

Disordered stretches follow at residues 33-55 (ERRPSEEETEGSEVSYNSSQETY), 67-87 (LGSAPQSPTNFKPQQSEKSNV), and 222-253 (KRKSAPQLNPHKMKKRKRGPEFVKKSKTSSGN). Composition is skewed to polar residues over residues 44 to 55 (SEVSYNSSQETY) and 69 to 87 (SAPQSPTNFKPQQSEKSNV). Zn(2+) contacts are provided by Cys-270, His-274, Cys-294, Cys-297, His-299, Cys-309, His-311, Cys-314, Cys-317, Cys-329, Cys-332, Cys-359, Cys-364, His-376, and His-380. The RING-type zinc-finger motif lies at 294 to 333 (CLVCEHILSDPVQTSCKHLFCRICILKYIKLMGCYCPSCK). The RAG1-type zinc-finger motif lies at 355-384 (LLLKCTVSGCDEEISLGKYSHHISKHKETK). The NBD DNA-binding region spans 395 to 462 (GGRPRQHLLT…QADELEAIME (68 aa)). Positions 606, 714, and 968 each coordinate a divalent metal cation.

This sequence belongs to the RAG1 family. Homodimer. Component of the RAG complex composed of core components rag1 and rag2. Requires Mg(2+) as cofactor. Mn(2+) is required as a cofactor. Expressed within the thymus, liver and spleen in juvenile frogs, and within the thymus and bone marrow of adults.

The protein resides in the nucleus. The enzyme catalyses S-ubiquitinyl-[E2 ubiquitin-conjugating enzyme]-L-cysteine + [acceptor protein]-L-lysine = [E2 ubiquitin-conjugating enzyme]-L-cysteine + N(6)-ubiquitinyl-[acceptor protein]-L-lysine.. In terms of biological role, catalytic component of the RAG complex, a multiprotein complex that mediates the DNA cleavage phase during V(D)J recombination. V(D)J recombination assembles a diverse repertoire of immunoglobulin and T-cell receptor genes in developing B and T lymphocytes through rearrangement of different V (variable), in some cases D (diversity), and J (joining) gene segments. In the RAG complex, RAG1 mediates the DNA-binding to the conserved recombination signal sequences (RSS) and catalyzes the DNA cleavage activities by introducing a double-strand break between the RSS and the adjacent coding segment. RAG2 is not a catalytic component but is required for all known catalytic activities. DNA cleavage occurs in 2 steps: a first nick is introduced in the top strand immediately upstream of the heptamer, generating a 3'-hydroxyl group that can attack the phosphodiester bond on the opposite strand in a direct transesterification reaction, thereby creating 4 DNA ends: 2 hairpin coding ends and 2 blunt, 5'-phosphorylated ends. In addition to its endonuclease activity, RAG1 also acts as an E3 ubiquitin-protein ligase that mediates monoubiquitination of histone H3. Histone H3 monoubiquitination is required for the joining step of V(D)J recombination. The sequence is that of V(D)J recombination-activating protein 1 (rag1) from Xenopus laevis (African clawed frog).